A 360-amino-acid chain; its full sequence is Sphingolipid delta(4)-desaturase (360 aa).

A run of 3 helical transmembrane segments spans residues 67 to 87 (AVVLLQLSIAYALKNTPVLSF), 89 to 109 (FLALAYVVGATANQNCFLCIH), and 125 to 145 (LFAIWVNLPIGVPYSASFQPY). The Histidine box-1 motif lies at 109-113 (HELSH). The Histidine box-2 signature appears at 146-150 (HQLHH). A run of 3 helical transmembrane segments spans residues 170-190 (VLSSLLGKAFFATFQIFFYAL), 202-222 (FIHLLNVLVCLVSDFILIKFG), and 228-248 (WYLILSSFFAGSLHPTAGHFI). The Histidine box-3 signature appears at 288–292 (HNEHH).

Belongs to the fatty acid desaturase type 1 family. DEGS subfamily.

Its subcellular location is the membrane. It carries out the reaction an N-acylsphinganine + 2 Fe(II)-[cytochrome b5] + O2 + 2 H(+) = an N-acylsphing-4-enine + 2 Fe(III)-[cytochrome b5] + 2 H2O. It participates in lipid metabolism; sphingolipid metabolism. Its function is as follows. Delta(4)-fatty-acid desaturase which introduces a double bond at the 4-position in the long-chain base (LCB) of ceramides. Required for the formation of the monounsaturated sphingoid base (E)-sphing-4-enine during glucosylceramide (GluCer) biosynthesis. The polypeptide is Sphingolipid delta(4)-desaturase (Komagataella phaffii (strain GS115 / ATCC 20864) (Yeast)).